We begin with the raw amino-acid sequence, 493 residues long: UDP-N-acetylmuramoyl-L-alanyl-D-glutamate--2,6-diaminopimelate ligase (493 aa).

Serine 31 is a UDP-N-acetyl-alpha-D-muramoyl-L-alanyl-D-glutamate binding site. 111 to 117 (GTNGKTT) contacts ATP. UDP-N-acetyl-alpha-D-muramoyl-L-alanyl-D-glutamate contacts are provided by residues asparagine 152, 153-154 (TT), serine 180, and arginine 188. The residue at position 220 (lysine 220) is an N6-carboxylysine. Meso-2,6-diaminopimelate-binding positions include arginine 386, 410-413 (DNPR), glycine 462, and glutamate 466. Positions 410 to 413 (DNPR) match the Meso-diaminopimelate recognition motif motif.

It belongs to the MurCDEF family. MurE subfamily. It depends on Mg(2+) as a cofactor. In terms of processing, carboxylation is probably crucial for Mg(2+) binding and, consequently, for the gamma-phosphate positioning of ATP.

Its subcellular location is the cytoplasm. It catalyses the reaction UDP-N-acetyl-alpha-D-muramoyl-L-alanyl-D-glutamate + meso-2,6-diaminopimelate + ATP = UDP-N-acetyl-alpha-D-muramoyl-L-alanyl-gamma-D-glutamyl-meso-2,6-diaminopimelate + ADP + phosphate + H(+). Its pathway is cell wall biogenesis; peptidoglycan biosynthesis. Its function is as follows. Catalyzes the addition of meso-diaminopimelic acid to the nucleotide precursor UDP-N-acetylmuramoyl-L-alanyl-D-glutamate (UMAG) in the biosynthesis of bacterial cell-wall peptidoglycan. This is UDP-N-acetylmuramoyl-L-alanyl-D-glutamate--2,6-diaminopimelate ligase (murE1) from Oceanobacillus iheyensis (strain DSM 14371 / CIP 107618 / JCM 11309 / KCTC 3954 / HTE831).